The following is a 372-amino-acid chain: uncharacterized protein (372 aa).

4 to 18 serves as a coordination point for FAD; that stretch reads YIIVGAGILGASTAY.

Belongs to the DadA oxidoreductase family. Requires FAD as cofactor.

This is an uncharacterized protein from Bacillus subtilis (strain 168).